The primary structure comprises 357 residues: Histidinol-phosphate aminotransferase 1 (357 aa).

Residue lysine 217 is modified to N6-(pyridoxal phosphate)lysine.

This sequence belongs to the class-II pyridoxal-phosphate-dependent aminotransferase family. Histidinol-phosphate aminotransferase subfamily. Homodimer. The cofactor is pyridoxal 5'-phosphate.

It catalyses the reaction L-histidinol phosphate + 2-oxoglutarate = 3-(imidazol-4-yl)-2-oxopropyl phosphate + L-glutamate. Its pathway is amino-acid biosynthesis; L-histidine biosynthesis; L-histidine from 5-phospho-alpha-D-ribose 1-diphosphate: step 7/9. In Burkholderia lata (strain ATCC 17760 / DSM 23089 / LMG 22485 / NCIMB 9086 / R18194 / 383), this protein is Histidinol-phosphate aminotransferase 1.